A 22-amino-acid chain; its full sequence is Chlorate reductase subunit gamma (22 aa).

The interval 1–22 (EXSEQNPNILEIKPGDTVKVXT) is disordered.

In terms of assembly, heterotrimer of alpha, beta and gamma subunits. The cofactor is heme b.

Its subcellular location is the cytoplasm. Its function is as follows. May transfer electrons to the iron-sulfur centers of the beta subunit of chlorate reductase. This Stutzerimonas chloritidismutans (Pseudomonas chloritidismutans) protein is Chlorate reductase subunit gamma.